The primary structure comprises 273 residues: Ribosomal RNA small subunit methyltransferase A (273 aa).

The S-adenosyl-L-methionine site is built by N18, L20, G45, E66, D91, and N113.

It belongs to the class I-like SAM-binding methyltransferase superfamily. rRNA adenine N(6)-methyltransferase family. RsmA subfamily.

The protein resides in the cytoplasm. The enzyme catalyses adenosine(1518)/adenosine(1519) in 16S rRNA + 4 S-adenosyl-L-methionine = N(6)-dimethyladenosine(1518)/N(6)-dimethyladenosine(1519) in 16S rRNA + 4 S-adenosyl-L-homocysteine + 4 H(+). In terms of biological role, specifically dimethylates two adjacent adenosines (A1518 and A1519) in the loop of a conserved hairpin near the 3'-end of 16S rRNA in the 30S particle. May play a critical role in biogenesis of 30S subunits. This chain is Ribosomal RNA small subunit methyltransferase A, found in Salmonella newport (strain SL254).